A 169-amino-acid chain; its full sequence is Fumarase E (169 aa).

It belongs to the MtlR/FumE family.

It carries out the reaction (S)-malate = fumarate + H2O. Functionally, in vitro catalyzes the addition of water to fumarate, forming malate. Cannot catalyze the reverse reaction. Cannot use the cis-isomer maleate as substrate. This is Fumarase E from Escherichia coli (strain K12).